A 112-amino-acid chain; its full sequence is Abdominal ganglion neuropeptides L5-67 (112 aa).

The N-terminal stretch at 1-23 (MKTAVLLVCLAYVMAAILSLCAS) is a signal peptide. Residue Phe33 is modified to Phenylalanine amide.

The prohormone is proteolytically cleaved in 2 steps, yielding first 2 products: luqin and PRMP. In the second step, PRMP is cleaved to yield luqin-B and luqin-C. Neurons L2-4 and L6, also called giant dorsal LUQ (Left Upper Quadrant) neurons of the abdominal ganglion. Also expressed in smaller neurons in the CNS and in peripheral organs such as the kidney.

The protein resides in the secreted. The chain is Abdominal ganglion neuropeptides L5-67 from Aplysia californica (California sea hare).